A 239-amino-acid chain; its full sequence is Uridylate kinase (239 aa).

13–16 (KLSG) serves as a coordination point for ATP. A UMP-binding site is contributed by Gly55. ATP contacts are provided by Gly56 and Arg60. UMP-binding positions include Asp75 and 136–143 (TGNPFFTT). Positions 163, 169, and 172 each coordinate ATP.

Belongs to the UMP kinase family. Homohexamer.

It is found in the cytoplasm. The enzyme catalyses UMP + ATP = UDP + ADP. The protein operates within pyrimidine metabolism; CTP biosynthesis via de novo pathway; UDP from UMP (UMPK route): step 1/1. Its activity is regulated as follows. Inhibited by UTP. Its function is as follows. Catalyzes the reversible phosphorylation of UMP to UDP. The sequence is that of Uridylate kinase from Chromobacterium violaceum (strain ATCC 12472 / DSM 30191 / JCM 1249 / CCUG 213 / NBRC 12614 / NCIMB 9131 / NCTC 9757 / MK).